Here is a 338-residue protein sequence, read N- to C-terminus: DNA-directed RNA polymerase subunit alpha (338 aa).

The interval 1–226 (MLIAQRPSLT…ELFGLARELN (226 aa)) is alpha N-terminal domain (alpha-NTD). The alpha C-terminal domain (alpha-CTD) stretch occupies residues 243–338 (LAADLVMPIE…DAGFLETEHY (96 aa)).

Belongs to the RNA polymerase alpha chain family. Homodimer. The RNAP catalytic core consists of 2 alpha, 1 beta, 1 beta' and 1 omega subunit. When a sigma factor is associated with the core the holoenzyme is formed, which can initiate transcription.

The enzyme catalyses RNA(n) + a ribonucleoside 5'-triphosphate = RNA(n+1) + diphosphate. DNA-dependent RNA polymerase catalyzes the transcription of DNA into RNA using the four ribonucleoside triphosphates as substrates. This is DNA-directed RNA polymerase subunit alpha from Streptomyces avermitilis (strain ATCC 31267 / DSM 46492 / JCM 5070 / NBRC 14893 / NCIMB 12804 / NRRL 8165 / MA-4680).